The sequence spans 2238 residues: Golgin subfamily A member 4 (2238 aa).

The disordered stretch occupies residues 1 to 90 (MFKKLKQKIS…QTFAQKLQLR (90 aa)). Residue serine 10 is modified to Phosphoserine. Over residues 12-41 (EQQQLQQALAPAQASSSSSTPTRTRSRTSS) the composition is skewed to low complexity. Threonine 39 is subject to Phosphothreonine. Serine 41 bears the Phosphoserine mark. 2 stretches are compositionally biased toward polar residues: residues 52 to 62 (NRENASTQATK) and 73 to 85 (SPSQ…TFAQ). Residues serine 93 and serine 100 each carry the phosphoserine modification. Disordered stretches follow at residues 132–154 (AAAF…NSDG), 1695–1744 (LKER…SQDC), and 1770–1789 (LEQG…HRAL). An interaction with MACF1 region spans residues 154–224 (GLSREQLLQR…EELQMDQQAK (71 aa)). A coiled-coil region spans residues 156–2161 (SREQLLQRLR…RYEKNACAAT (2006 aa)). Basic and acidic residues predominate over residues 1695-1711 (LKEREKQVHSLEDKLKN). Residues 2178-2225 (LFGEPTEFEYLRKVMFEYMMGRETKTMAKVITTVLKFPDDQAQKILER) enclose the GRIP domain.

Homodimer. Interacts with GTP-bound ARL1 and ARL3. Interacts with MACF1. Directly interacts with TBC1D23. Interacts with FAM91A1; this interaction may be mediated by TBC1D23. In terms of tissue distribution, ubiquitous. Highly expressed in oligodendrocyte precursors, particularly at a stage just prior to myelination.

The protein localises to the cytoplasm. The protein resides in the golgi apparatus membrane. It is found in the golgi apparatus. It localises to the trans-Golgi network membrane. Functionally, involved in vesicular trafficking at the Golgi apparatus level. May play a role in delivery of transport vesicles containing GPI-linked proteins from the trans-Golgi network through its interaction with MACF1. Involved in endosome-to-Golgi trafficking. The chain is Golgin subfamily A member 4 (Golga4) from Mus musculus (Mouse).